The chain runs to 370 residues: Calcium-binding protein 1 (370 aa).

Residues 1-198 (MGGGDGAAFK…GRGDSVPAAA (198 aa)) form a disordered region. A lipid anchor (N-myristoyl glycine) is attached at Gly2. Residue Gly4 is the site of S-palmitoyl cysteine attachment. 3 stretches are compositionally biased toward low complexity: residues 50 to 61 (HASAGPAAMSSH), 68 to 84 (KTSL…GGSR), and 148 to 157 (ALPAAASRPS). 4 EF-hand domains span residues 225-260 (EEIE…MGYM), 279-296 (GHVD…KLLA), 302-337 (IGVK…LLGH), and 339-370 (VGHR…MMSR). Ca(2+) contacts are provided by Asp238, Asp240, Asp242, Tyr244, and Asp249. Mg(2+)-binding residues include Asp238, Asp240, Asp242, and Tyr244. Ca(2+) contacts are provided by Asp315, Asn317, Asp319, and Glu321. Ser323 bears the Phosphoserine mark. 9 residues coordinate Ca(2+): Glu326, Asp352, Leu353, Asn354, Asp356, Gly357, Arg358, Asp360, and Glu363.

As to quaternary structure, homodimer; when bound to calcium or magnesium. Interacts (via C-terminus) with ITPR1, ITPR2 and ITPR3. This binding is calcium dependent and the interaction correlates with calcium concentration. An additional calcium-independent interaction with the N-terminus of ITPR1 results in a decreased InsP(3) binding to the receptor. Interacts with CACNA1A (via C-terminal CDB motif) in the pre- and postsynaptic membranes. Interacts with CACNA1C (via C-terminal C and IQ motifs). The binding to the C motif is calcium independent whereas the binding to IQ requires the presence of calcium and is mutually exclusive with calmodulin binding. Interacts with CACNA1D. Interacts with TRPC5 (via C-terminus). Interacts (via EF-hands 1 and 2) at microtubules with MAP1LC3B. Interacts with MYO1C. Interacts (via EF-hands 1 and 2) with NSMF (via the central NLS-containing motif region), the interaction occurs in a calcium dependent manner after synaptic NMDA receptor stimulation and prevents nuclear import of NSMF. Interacts with SPACA9. Phosphorylated. The phosphorylation regulates the activity. In terms of tissue distribution, retina and brain. Somatodendritic compartment of neurons. Calbrain was found exclusively in brain where it is abundant in the hippocampus, habenular area in the epithalamus and in the cerebellum.

Its subcellular location is the cytoplasm. The protein localises to the cytoskeleton. It localises to the perinuclear region. It is found in the cell membrane. The protein resides in the golgi apparatus. Its subcellular location is the postsynaptic density. The protein localises to the cell cortex. Functionally, modulates calcium-dependent activity of inositol 1,4,5-triphosphate receptors (ITPRs). Inhibits agonist-induced intracellular calcium signaling. Enhances inactivation and does not support calcium-dependent facilitation of voltage-dependent P/Q-type calcium channels. Causes calcium-dependent facilitation and inhibits inactivation of L-type calcium channels by binding to the same sites as calmodulin in the C-terminal domain of CACNA1C, but has an opposite effect on channel function. Suppresses the calcium-dependent inactivation of CACNA1D. Inhibits TRPC5 channels. Prevents NMDA receptor-induced cellular degeneration. Required for the normal transfer of light signals through the retina. The sequence is that of Calcium-binding protein 1 (CABP1) from Homo sapiens (Human).